Here is a 152-residue protein sequence, read N- to C-terminus: Deoxyuridine 5'-triphosphate nucleotidohydrolase (152 aa).

Substrate is bound by residues 71–73, N84, 88–90, and M98; these read RSG and LID.

This sequence belongs to the dUTPase family. Mg(2+) is required as a cofactor.

The enzyme catalyses dUTP + H2O = dUMP + diphosphate + H(+). It functions in the pathway pyrimidine metabolism; dUMP biosynthesis; dUMP from dCTP (dUTP route): step 2/2. In terms of biological role, this enzyme is involved in nucleotide metabolism: it produces dUMP, the immediate precursor of thymidine nucleotides and it decreases the intracellular concentration of dUTP so that uracil cannot be incorporated into DNA. This is Deoxyuridine 5'-triphosphate nucleotidohydrolase from Hahella chejuensis (strain KCTC 2396).